Consider the following 178-residue polypeptide: Caveolin-1 (178 aa).

An N-acetylserine modification is found at Ser-2. The residue at position 2 (Ser-2) is a Phosphoserine. The interval 2-94 (SGGKYVDSEG…WKASFTTFTV (93 aa)) is required for homooligomerization. Residues 2 to 104 (SGGKYVDSEG…TKYWFYRLLS (103 aa)) are Cytoplasmic-facing. At Lys-5 the chain carries N6-acetyllysine; alternate. A Glycyl lysine isopeptide (Lys-Gly) (interchain with G-Cter in ubiquitin); alternate cross-link involves residue Lys-5. Tyr-6 bears the Phosphotyrosine mark. Ser-9 is subject to Phosphoserine. Tyr-14 bears the Phosphotyrosine; by ABL1 and INSR mark. Tyr-25 is modified (phosphotyrosine). Glycyl lysine isopeptide (Lys-Gly) (interchain with G-Cter in ubiquitin) cross-links involve residues Lys-26, Lys-30, Lys-39, Lys-47, and Lys-57. The interaction with CAVIN3 stretch occupies residues 82–94 (DGIWKASFTTFTV). Positions 105-125 (TIFGIPMALIWGIYFAILSFL) form an intramembrane region, helical. Residues 126 to 178 (HIWAVVPCIKSFLIEIQCISRVYSIYVHTFCDPLFEAIGKIFSNIRISTQKEI) are Cytoplasmic-facing. Residues 131-142 (VPCIKSFLIEIQ) form an interacts with SPRY1, SPRY2, SPRY3 and SPRY4 region. Residues Cys-133, Cys-143, and Cys-156 are each lipidated (S-palmitoyl cysteine). The segment at 149 to 160 (SIYVHTFCDPLF) is interacts with SPRY1, SPRY2, and SPRY4. Residues 167 to 178 (FSNIRISTQKEI) form an interacts with SPRY1, SPRY2, SPRY3 and SPRY4 region.

It belongs to the caveolin family. Homooligomer. Interacts (via the N-terminus) with DPP4; the interaction is direct. Forms a stable heterooligomeric complex with CAV2 that targets to lipid rafts and drives caveolae formation. Interacts with BMX, BTK, CTNNB1, CDH1, GLIPR2, JUP, NOSTRIN, SNAP25 and STX1A. Interacts with SLC7A9. Interacts with TGFBR1. Interacts with CTNNB1, CDH1 and JUP. Interacts with PACSIN2; this interaction induces membrane tubulation. Interacts with CAVIN3 (via leucine-zipper domain) in a cholesterol-sensitive manner. Interacts with EHD2 in a cholesterol-dependent manner. Interacts with CAVIN1. Forms a ternary complex with UBXN6 and VCP; mediates CAV1 targeting to lysosomes for degradation. Interacts with ABCG1; this interaction regulates ABCG1-mediated cholesterol efflux. Interacts with NEU3; this interaction enhances NEU3 sialidase activity within caveola. Interacts (via C-terminus) with SPRY1, SPRY2 (via C-terminus), SPRY3, and SPRY4. Interacts with IGFBP5; this interaction allows trafficking of IGFBP5 from the plasma membrane to the nucleus. Post-translationally, the N-terminus of both isoforms are blocked. Phosphorylated at Tyr-14 by ABL1 in response to oxidative stress. In terms of processing, ubiquitinated. Undergo monoubiquitination and multi- and/or polyubiquitination. Monoubiquitination of N-terminal lysines promotes integration in a ternary complex with UBXN6 and VCP which promotes oligomeric CAV1 targeting to lysosomes for degradation. Ubiquitinated by ZNRF1; leading to degradation and modulation of the TLR4-mediated immune response. As to expression, adipose tissue, lung, heart, skeletal muscle, stomach, small bowel, kidney, spleen and testis (at protein level).

Its subcellular location is the golgi apparatus membrane. It localises to the cell membrane. It is found in the membrane. The protein resides in the caveola. The protein localises to the membrane raft. Its subcellular location is the golgi apparatus. It localises to the trans-Golgi network. Its function is as follows. May act as a scaffolding protein within caveolar membranes. Forms a stable heterooligomeric complex with CAV2 that targets to lipid rafts and drives caveolae formation. Mediates the recruitment of CAVIN proteins (CAVIN1/2/3/4) to the caveolae. Interacts directly with G-protein alpha subunits and can functionally regulate their activity. Involved in the costimulatory signal essential for T-cell receptor (TCR)-mediated T-cell activation. Its binding to DPP4 induces T-cell proliferation and NF-kappa-B activation in a T-cell receptor/CD3-dependent manner. Recruits CTNNB1 to caveolar membranes and may regulate CTNNB1-mediated signaling through the Wnt pathway. Negatively regulates TGFB1-mediated activation of SMAD2/3 by mediating the internalization of TGFBR1 from membrane rafts leading to its subsequent degradation. Binds 20(S)-hydroxycholesterol (20(S)-OHC). The sequence is that of Caveolin-1 (Cav1) from Mus musculus (Mouse).